Reading from the N-terminus, the 190-residue chain is Endoribonuclease YbeY (190 aa).

The tract at residues 1-25 is disordered; the sequence is MSQPRPGHRPDCNGADPDSNFASMT. H147, H151, and H157 together coordinate Zn(2+).

This sequence belongs to the endoribonuclease YbeY family. Requires Zn(2+) as cofactor.

It localises to the cytoplasm. Its function is as follows. Single strand-specific metallo-endoribonuclease involved in late-stage 70S ribosome quality control and in maturation of the 3' terminus of the 16S rRNA. This Rhodopseudomonas palustris (strain ATCC BAA-98 / CGA009) protein is Endoribonuclease YbeY.